Reading from the N-terminus, the 440-residue chain is Ribosomal protein uS12 methylthiotransferase RimO (440 aa).

Residues P5–P115 form the MTTase N-terminal domain. Residues C14, C50, C79, C148, C152, and C155 each contribute to the [4Fe-4S] cluster site. Positions L134–A372 constitute a Radical SAM core domain. The TRAM domain maps to Q375 to I440.

The protein belongs to the methylthiotransferase family. RimO subfamily. [4Fe-4S] cluster serves as cofactor.

Its subcellular location is the cytoplasm. The enzyme catalyses L-aspartate(89)-[ribosomal protein uS12]-hydrogen + (sulfur carrier)-SH + AH2 + 2 S-adenosyl-L-methionine = 3-methylsulfanyl-L-aspartate(89)-[ribosomal protein uS12]-hydrogen + (sulfur carrier)-H + 5'-deoxyadenosine + L-methionine + A + S-adenosyl-L-homocysteine + 2 H(+). Its function is as follows. Catalyzes the methylthiolation of an aspartic acid residue of ribosomal protein uS12. The chain is Ribosomal protein uS12 methylthiotransferase RimO from Stutzerimonas stutzeri (strain A1501) (Pseudomonas stutzeri).